We begin with the raw amino-acid sequence, 570 residues long: Proline--tRNA ligase (570 aa).

It belongs to the class-II aminoacyl-tRNA synthetase family. ProS type 1 subfamily. In terms of assembly, homodimer.

Its subcellular location is the cytoplasm. It carries out the reaction tRNA(Pro) + L-proline + ATP = L-prolyl-tRNA(Pro) + AMP + diphosphate. In terms of biological role, catalyzes the attachment of proline to tRNA(Pro) in a two-step reaction: proline is first activated by ATP to form Pro-AMP and then transferred to the acceptor end of tRNA(Pro). As ProRS can inadvertently accommodate and process non-cognate amino acids such as alanine and cysteine, to avoid such errors it has two additional distinct editing activities against alanine. One activity is designated as 'pretransfer' editing and involves the tRNA(Pro)-independent hydrolysis of activated Ala-AMP. The other activity is designated 'posttransfer' editing and involves deacylation of mischarged Ala-tRNA(Pro). The misacylated Cys-tRNA(Pro) is not edited by ProRS. In Geotalea daltonii (strain DSM 22248 / JCM 15807 / FRC-32) (Geobacter daltonii), this protein is Proline--tRNA ligase.